A 630-amino-acid chain; its full sequence is 1-deoxy-D-xylulose-5-phosphate synthase (630 aa).

Thiamine diphosphate is bound by residues His72 and 113 to 115; that span reads GHS. Asp144 is a Mg(2+) binding site. Thiamine diphosphate contacts are provided by residues 145-146, Asn173, Tyr284, and Glu367; that span reads GA. Residue Asn173 participates in Mg(2+) binding.

The protein belongs to the transketolase family. DXPS subfamily. Homodimer. Requires Mg(2+) as cofactor. It depends on thiamine diphosphate as a cofactor.

The enzyme catalyses D-glyceraldehyde 3-phosphate + pyruvate + H(+) = 1-deoxy-D-xylulose 5-phosphate + CO2. It functions in the pathway metabolic intermediate biosynthesis; 1-deoxy-D-xylulose 5-phosphate biosynthesis; 1-deoxy-D-xylulose 5-phosphate from D-glyceraldehyde 3-phosphate and pyruvate: step 1/1. Functionally, catalyzes the acyloin condensation reaction between C atoms 2 and 3 of pyruvate and glyceraldehyde 3-phosphate to yield 1-deoxy-D-xylulose-5-phosphate (DXP). This Bacillus cereus (strain AH820) protein is 1-deoxy-D-xylulose-5-phosphate synthase.